The following is a 282-amino-acid chain: 2,3,4,5-tetrahydropyridine-2,6-dicarboxylate N-succinyltransferase (282 aa).

2 residues coordinate substrate: arginine 109 and aspartate 146.

This sequence belongs to the transferase hexapeptide repeat family. As to quaternary structure, homotrimer.

Its subcellular location is the cytoplasm. It carries out the reaction (S)-2,3,4,5-tetrahydrodipicolinate + succinyl-CoA + H2O = (S)-2-succinylamino-6-oxoheptanedioate + CoA. Its pathway is amino-acid biosynthesis; L-lysine biosynthesis via DAP pathway; LL-2,6-diaminopimelate from (S)-tetrahydrodipicolinate (succinylase route): step 1/3. This is 2,3,4,5-tetrahydropyridine-2,6-dicarboxylate N-succinyltransferase from Bartonella quintana (strain Toulouse) (Rochalimaea quintana).